The primary structure comprises 546 residues: Probable E3 ubiquitin-protein ligase NGR_a03640 (546 aa).

Positions 1 to 70 (MNVQRPGLAV…RPWEGRPQEA (70 aa)) are disordered. Positions 1-248 (MNVQRPGLAV…YAGPQIFLPM (248 aa)) are interaction with target proteins. Low complexity predominate over residues 22–48 (SEPGSPAAAARWVEASTEAEASAASSS). The span at 58–67 (AEERPWEGRP) shows a compositional bias: basic and acidic residues. LRR repeat units lie at residues 104–125 (GLRRLNVNNNQLGDLPDTLPGT), 126–144 (LLELEASENRLTRLPDLPA), 145–166 (GLQRLNVENNRLTNLPEPLPAA), 167–186 (LEWLGAGYNQLTRLPEMIPP), and 187–208 (ELIWLGARNNQLTSVPESLLTQ). The segment at 249 to 256 (GPVELARR) is linker. In terms of domain architecture, NEL spans 257 to 546 (PLHEVVADWL…KVLRGRGLEL (290 aa)). The segment at 257–546 (PLHEVVADWL…KVLRGRGLEL (290 aa)) is E3 ubiquitin-protein ligase catalytic domain. Cys-338 acts as the Glycyl thioester intermediate in catalysis.

Belongs to the LRR-containing bacterial E3 ligase family. Post-translationally, ubiquitinated in the presence of host E1 ubiquitin-activating enzyme, E2 ubiquitin-conjugating enzyme and ubiquitin.

It is found in the secreted. The protein resides in the host cytoplasm. Effector proteins function to alter host cell physiology and promote bacterial survival in host tissues. This protein is an E3 ubiquitin ligase that interferes with host's ubiquitination pathway. This chain is Probable E3 ubiquitin-protein ligase NGR_a03640, found in Sinorhizobium fredii (strain NBRC 101917 / NGR234).